Consider the following 306-residue polypeptide: Non-specific ribonucleoside hydrolase RihC (306 aa).

The active site involves His-235.

Belongs to the IUNH family. RihC subfamily.

Hydrolyzes both purine and pyrimidine ribonucleosides with a broad-substrate specificity. This chain is Non-specific ribonucleoside hydrolase RihC, found in Salmonella schwarzengrund (strain CVM19633).